A 291-amino-acid polypeptide reads, in one-letter code: MVAFSSLFLGASIAATALAAPGELPGMHLNKRQTYTQSATGTHDGYYFSFWTDGGPNVRYTNEAGGQYSVTWSGNGNWVGGKGWNPGAARTINYTGTYQPNGNSYLAVYGWTRNPLVEYYVVENFGTYDPSTGAQRLGSINVDGSTYNVYRTRRTNAPSIEGTRSFDQYWSVRVNKRVGGSVDMNAHFNAWRQAGLTLGTHDYQIVATEGYFSSGSARINVGGGSTGGGNNGGGNNGGNPGGNPGGNPGGNPGGNCSPRWGQCGGQGWNGPTCCESGTTCRQQNQWYSQCL.

An N-terminal signal peptide occupies residues 1–19 (MVAFSSLFLGASIAATALA). One can recognise a GH11 domain in the interval 34-222 (TYTQSATGTH…SSGSARINVG (189 aa)). N-linked (GlcNAc...) asparagine glycosylation occurs at asparagine 93. Glutamate 118 (nucleophile) is an active-site residue. Glutamate 209 (proton donor) is an active-site residue. The interval 223-246 (GGSTGGGNNGGGNNGGNPGGNPGG) is disordered. Positions 255–291 (NCSPRWGQCGGQGWNGPTCCESGTTCRQQNQWYSQCL) constitute a CBM1 domain.

Belongs to the glycosyl hydrolase 11 (cellulase G) family.

It localises to the secreted. The catalysed reaction is Endohydrolysis of (1-&gt;4)-beta-D-xylosidic linkages in xylans.. The protein operates within glycan degradation; xylan degradation. The activity iss completely inhibited by Hg(2+), a metal ion that interacts with Trp and oxidizes the indole ring, and is significantly enhanced by beta-mercaptoethanol, which counteracts the oxidation effects of the S-S linkage between Cys residues. Functionally, endo-1,4-beta-xylanase involved in the hydrolysis of xylan, a major structural heterogeneous polysaccharide found in plant biomass representing the second most abundant polysaccharide in the biosphere, after cellulose. Shows maximum activity on soluble wheat arabinoxylan (defined as 100%), moderate activity on birchwood xylan (80.5%) and beechwood xylan (76.2%), and weak activity on insoluble wheat arabinoxylan (7.0%). Has no activity towards glucan or carboxymethyl cellulose-sodium (CMC-Na). The protein is Endo-1,4-beta-xylanase 11B of Humicola insolens (Soft-rot fungus).